A 377-amino-acid chain; its full sequence is Ribosomal RNA large subunit methyltransferase G (377 aa).

Belongs to the methyltransferase superfamily. RlmG family.

The protein resides in the cytoplasm. It carries out the reaction guanosine(1835) in 23S rRNA + S-adenosyl-L-methionine = N(2)-methylguanosine(1835) in 23S rRNA + S-adenosyl-L-homocysteine + H(+). Functionally, specifically methylates the guanine in position 1835 (m2G1835) of 23S rRNA. This is Ribosomal RNA large subunit methyltransferase G from Streptomyces coelicolor (strain ATCC BAA-471 / A3(2) / M145).